The following is a 222-amino-acid chain: Interleukin-12 subunit alpha (222 aa).

A signal peptide spans 1–25; that stretch reads MCPLRNLLLVATLVLLNHLDHLSLG. 3 cysteine pairs are disulfide-bonded: Cys40-Cys113, Cys67-Cys199, and Cys88-Cys126. N-linked (GlcNAc...) asparagine glycosylation is found at Asn42 and Asn96.

This sequence belongs to the IL-6 superfamily. As to quaternary structure, heterodimer with IL12B; disulfide-linked. This heterodimer is known as interleukin IL-12. Heterodimer with EBI3/IL27B; not disulfide-linked. This heterodimer is known as interleukin IL-35. Interacts with NBR1; this interaction promotes IL-12 secretion.

It localises to the secreted. In terms of biological role, heterodimerizes with IL12B to form the IL-12 cytokine or with EBI3/IL27B to form the IL-35 cytokine. IL-12 is primarily produced by professional antigen-presenting cells (APCs) such as B-cells and dendritic cells (DCs) as well as macrophages and granulocytes and regulates T-cell and natural killer-cell responses, induces the production of interferon-gamma (IFN-gamma), favors the differentiation of T-helper 1 (Th1) cells and is an important link between innate resistance and adaptive immunity. Mechanistically, exerts its biological effects through a receptor composed of IL12R1 and IL12R2 subunits. Binding to the receptor results in the rapid tyrosine phosphorylation of a number of cellular substrates including the JAK family kinases TYK2 and JAK2. In turn, recruited STAT4 gets phosphorylated and translocates to the nucleus where it regulates cytokine/growth factor responsive genes. As part of IL-35, plays essential roles in maintaining the immune homeostasis of the liver microenvironment and also functions as an immune-suppressive cytokine. Mediates biological events through unconventional receptors composed of IL12RB2 and gp130/IL6ST heterodimers or homodimers. Signaling requires the transcription factors STAT1 and STAT4, which form a unique heterodimer that binds to distinct DNA sites. The chain is Interleukin-12 subunit alpha (IL12A) from Sus scrofa (Pig).